Reading from the N-terminus, the 556-residue chain is Glutamine--tRNA ligase (556 aa).

The 'HIGH' region signature appears at 39–49 (PEPNGYLHIGH). Residues 40 to 42 (EPN) and 46 to 52 (HIGHAKS) each bind ATP. L-glutamine contacts are provided by Asp-72 and Tyr-217. ATP is bound by residues Thr-236 and 267 to 268 (RL). The 'KMSKS' region signature appears at 274 to 278 (LTSKR).

This sequence belongs to the class-I aminoacyl-tRNA synthetase family. In terms of assembly, monomer.

The protein resides in the cytoplasm. The enzyme catalyses tRNA(Gln) + L-glutamine + ATP = L-glutaminyl-tRNA(Gln) + AMP + diphosphate. In Haemophilus ducreyi (strain 35000HP / ATCC 700724), this protein is Glutamine--tRNA ligase.